We begin with the raw amino-acid sequence, 1070 residues long: Phosphatidylinositol 4,5-bisphosphate 3-kinase catalytic subunit beta isoform (1070 aa).

Positions 26 to 115 constitute a PI3K-ABD domain; sequence SDGSISVDFL…LPVLKLVTRS (90 aa). One can recognise a PI3K-RBD domain in the interval 194 to 285; it reads GGKLVVAVHF…RTLPHFILVE (92 aa). Ser-324 is modified (phosphoserine). One can recognise a C2 PI3K-type domain in the interval 327 to 496; sequence WGNNNPFQIV…NATALHIKFP (170 aa). Positions 410–418 match the Nuclear localization signal (NLS) motif; it reads KVKTKKSTK. The PIK helical domain occupies 524-701; that stretch reads ANVSSRGGKK…GVILEAYCRG (178 aa). In terms of domain architecture, PI3K/PI4K catalytic spans 772–1053; that stretch reads YVEKCRYMDS…KFDEALRESW (282 aa). Positions 778–784 are G-loop; that stretch reads YMDSKMK. Residues 916–924 form a catalytic loop region; it reads GIGDRHSDN. Residues 935–961 form an activation loop region; that stretch reads HIDFGHILGNFKSKFGIKRERVPFILT. At Ser-1070 the chain carries Phosphoserine; by autocatalysis.

The protein belongs to the PI3/PI4-kinase family. Heterodimer of a catalytic subunit PIK3CB and a p85 regulatory subunit (PIK3R1, PIK3R2 or PIK3R3). Interaction with PIK3R2 is required for nuclear localization and nuclear export. Part of a complex with PIK3R1 and PTEN. Binding to PTEN may antagonize the lipid kinase activity under normal growth conditions. Part of a complex involved in autophagosome formation composed of PIK3C3 and PIK3R4. Interacts with BECN1, ATG14 and RAB5A. In terms of processing, autophosphorylation at Ser-1070 negatively regulates the phosphatidylinositol-4,5-bisphosphate 3-kinase activity.

The protein localises to the cytoplasm. The protein resides in the nucleus. It catalyses the reaction a 1,2-diacyl-sn-glycero-3-phospho-(1D-myo-inositol-4,5-bisphosphate) + ATP = a 1,2-diacyl-sn-glycero-3-phospho-(1D-myo-inositol-3,4,5-trisphosphate) + ADP + H(+). The enzyme catalyses 1-octadecanoyl-2-(5Z,8Z,11Z,14Z)-eicosatetraenoyl-sn-glycero-3-phospho-1D-myo-inositol 4,5-bisphosphate + ATP = 1-octadecanoyl-2-(5Z,8Z,11Z,14Z-eicosatetraenoyl)-sn-glycero-3-phospho-(1D-myo-inositol 3,4,5-triphosphate) + ADP + H(+). It carries out the reaction L-seryl-[protein] + ATP = O-phospho-L-seryl-[protein] + ADP + H(+). It participates in phospholipid metabolism; phosphatidylinositol phosphate biosynthesis. Its function is as follows. Phosphoinositide-3-kinase (PI3K) phosphorylates phosphatidylinositol (PI) derivatives at position 3 of the inositol ring to produce 3-phosphoinositides. Uses ATP and PtdIns(4,5)P2 (phosphatidylinositol 4,5-bisphosphate) to generate phosphatidylinositol 3,4,5-trisphosphate (PIP3). PIP3 plays a key role by recruiting PH domain-containing proteins to the membrane, including AKT1 and PDPK1, activating signaling cascades involved in cell growth, survival, proliferation, motility and morphology. Involved in the activation of AKT1 upon stimulation by G-protein coupled receptors (GPCRs) ligands such as CXCL12, sphingosine 1-phosphate, and lysophosphatidic acid. May also act downstream receptor tyrosine kinases. Required in different signaling pathways for stable platelet adhesion and aggregation. Plays a role in platelet activation signaling triggered by GPCRs, alpha-IIb/beta-3 integrins (ITGA2B/ ITGB3) and ITAM (immunoreceptor tyrosine-based activation motif)-bearing receptors such as GP6. Regulates the strength of adhesion of ITGA2B/ ITGB3 activated receptors necessary for the cellular transmission of contractile forces. Required for platelet aggregation induced by F2 (thrombin) and thromboxane A2 (TXA2). Has a role in cell survival. May have a role in cell migration. Involved in the early stage of autophagosome formation. Modulates the intracellular level of PtdIns3P (phosphatidylinositol 3-phosphate) and activates PIK3C3 kinase activity. May act as a scaffold, independently of its lipid kinase activity to positively regulate autophagy. May have a role in insulin signaling as scaffolding protein in which the lipid kinase activity is not required. May have a kinase-independent function in regulating cell proliferation and in clathrin-mediated endocytosis. Mediator of oncogenic signal in cell lines lacking PTEN. The lipid kinase activity is necessary for its role in oncogenic transformation. Required for the growth of ERBB2 and RAS driven tumors. Also has a protein kinase activity showing autophosphorylation. This is Phosphatidylinositol 4,5-bisphosphate 3-kinase catalytic subunit beta isoform (Pik3cb) from Rattus norvegicus (Rat).